A 427-amino-acid polypeptide reads, in one-letter code: Bifunctional enzyme MtnB/MtnX (427 aa).

The interval 1–221 (MRKPLIICDF…LEETAEVKEW (221 aa)) is HK-MTPenyl-1-P phosphatase. The tract at residues 222-427 (MSEQKRQELA…KLKALQAYHV (206 aa)) is MTRu-1-P dehydratase. Residues His-317 and His-319 each coordinate Zn(2+).

The protein in the N-terminal section; belongs to the HAD-like hydrolase superfamily. MtnX family. This sequence in the C-terminal section; belongs to the aldolase class II family. MtnB subfamily. As to quaternary structure, homotetramer. Requires Zn(2+) as cofactor.

It carries out the reaction 5-(methylsulfanyl)-D-ribulose 1-phosphate = 5-methylsulfanyl-2,3-dioxopentyl phosphate + H2O. The catalysed reaction is 2-hydroxy-5-methylsulfanyl-3-oxopent-1-enyl phosphate + H2O = 1,2-dihydroxy-5-(methylsulfanyl)pent-1-en-3-one + phosphate. The protein operates within amino-acid biosynthesis; L-methionine biosynthesis via salvage pathway; L-methionine from S-methyl-5-thio-alpha-D-ribose 1-phosphate: step 2/6. It participates in amino-acid biosynthesis; L-methionine biosynthesis via salvage pathway; L-methionine from S-methyl-5-thio-alpha-D-ribose 1-phosphate: step 4/6. Its function is as follows. Catalyzes the dehydration of methylthioribulose-1-phosphate (MTRu-1-P) into 2,3-diketo-5-methylthiopentyl-1-phosphate (DK-MTP-1-P). Dephosphorylates 2-hydroxy-3-keto-5-methylthiopentenyl-1-phosphate (HK-MTPenyl-1-P) yielding 1,2-dihydroxy-3-keto-5-methylthiopentene (DHK-MTPene). The chain is Bifunctional enzyme MtnB/MtnX (mtnB/mtnX) from Bacillus licheniformis (strain ATCC 14580 / DSM 13 / JCM 2505 / CCUG 7422 / NBRC 12200 / NCIMB 9375 / NCTC 10341 / NRRL NRS-1264 / Gibson 46).